Reading from the N-terminus, the 258-residue chain is Pyridoxine 5'-phosphate synthase (258 aa).

3-amino-2-oxopropyl phosphate is bound at residue asparagine 16. 18-19 is a binding site for 1-deoxy-D-xylulose 5-phosphate; the sequence is DH. Arginine 27 contributes to the 3-amino-2-oxopropyl phosphate binding site. Histidine 52 serves as the catalytic Proton acceptor. 1-deoxy-D-xylulose 5-phosphate is bound by residues arginine 54 and histidine 59. The active-site Proton acceptor is the glutamate 79. A 1-deoxy-D-xylulose 5-phosphate-binding site is contributed by threonine 109. Histidine 200 (proton donor) is an active-site residue. 3-amino-2-oxopropyl phosphate contacts are provided by residues glycine 201 and 222–223; that span reads GH.

The protein belongs to the PNP synthase family. Homooctamer; tetramer of dimers.

It localises to the cytoplasm. The catalysed reaction is 3-amino-2-oxopropyl phosphate + 1-deoxy-D-xylulose 5-phosphate = pyridoxine 5'-phosphate + phosphate + 2 H2O + H(+). It participates in cofactor biosynthesis; pyridoxine 5'-phosphate biosynthesis; pyridoxine 5'-phosphate from D-erythrose 4-phosphate: step 5/5. In terms of biological role, catalyzes the complicated ring closure reaction between the two acyclic compounds 1-deoxy-D-xylulose-5-phosphate (DXP) and 3-amino-2-oxopropyl phosphate (1-amino-acetone-3-phosphate or AAP) to form pyridoxine 5'-phosphate (PNP) and inorganic phosphate. This chain is Pyridoxine 5'-phosphate synthase, found in Burkholderia lata (strain ATCC 17760 / DSM 23089 / LMG 22485 / NCIMB 9086 / R18194 / 383).